The primary structure comprises 184 residues: MSTQNSAYSAFSSLLAEAAMPVSPAELHGHLLGRVCAGAGFDEAAWQHAAAELLGGAPGERLKAALSGLLGMVRQDFSAGEVAVVMLLPDDETPLAQRTEALGQWCQGFLAGFGLTAREGSLTGEAEEVLQDMAAIAQVQGQLEDSEDGETDYMEVMEYLRVAPLLLFAECGKPLEPAPKPSLH.

Belongs to the UPF0149 family.

This chain is UPF0149 protein PA14_69010, found in Pseudomonas aeruginosa (strain UCBPP-PA14).